We begin with the raw amino-acid sequence, 266 residues long: Mitochondrial genome maintenance protein MGM101 (266 aa).

The transit peptide at 1–23 directs the protein to the mitochondrion; sequence MLHSTKLVFRATPQALCFPVRSY. Composition is skewed to polar residues over residues 37–47 and 57–68; these read KTTSKLAPSIT and PSLQEPQSATST. The tract at residues 37–68 is disordered; sequence KTTSKLAPSITTEDEVAEQDPSLQEPQSATST.

It belongs to the MGM101 family. Forms homooligomers in vitro.

Its subcellular location is the mitochondrion matrix. It localises to the mitochondrion nucleoid. Plays a role in the replication of the mitochondrial genome and the maintenance of its telomeres. Able to catalyze strand annealing and D-loop formation. Binds a wide variety of DNA substrates. Exhibited the highest affinity for DNA molecules carrying 3' ssDNA overhangs (Y-form, 3' FLAP, 3' overhang) and for substrates with complex structures (X-O and Fork). Forms homogeneous ring-shaped structures at the ssDNA native telomeres ends. Oligomers seem to bind to the ssDNA as a filament until they reach the double-stranded region and induce the formation of bends and loops within the double-stranded part of the molecules. The chain is Mitochondrial genome maintenance protein MGM101 from Candida parapsilosis (strain CDC 317 / ATCC MYA-4646) (Yeast).